Consider the following 145-residue polypeptide: D-aminoacyl-tRNA deacylase (145 aa).

The Gly-cisPro motif, important for rejection of L-amino acids signature appears at 137-138 (GP).

Belongs to the DTD family. In terms of assembly, homodimer.

It localises to the cytoplasm. The catalysed reaction is glycyl-tRNA(Ala) + H2O = tRNA(Ala) + glycine + H(+). It catalyses the reaction a D-aminoacyl-tRNA + H2O = a tRNA + a D-alpha-amino acid + H(+). Its function is as follows. An aminoacyl-tRNA editing enzyme that deacylates mischarged D-aminoacyl-tRNAs. Also deacylates mischarged glycyl-tRNA(Ala), protecting cells against glycine mischarging by AlaRS. Acts via tRNA-based rather than protein-based catalysis; rejects L-amino acids rather than detecting D-amino acids in the active site. By recycling D-aminoacyl-tRNA to D-amino acids and free tRNA molecules, this enzyme counteracts the toxicity associated with the formation of D-aminoacyl-tRNA entities in vivo and helps enforce protein L-homochirality. This chain is D-aminoacyl-tRNA deacylase, found in Pseudomonas paraeruginosa (strain DSM 24068 / PA7) (Pseudomonas aeruginosa (strain PA7)).